The sequence spans 163 residues: DNA endonuclease I-CreI (163 aa).

2 residues coordinate Mg(2+): G19 and D20. Interaction with DNA stretches follow at residues 26–38 (QIKP…FKHQ), 44–47 (QVTQ), 68–70 (RDR), and 138–143 (SKTRKT).

This sequence belongs to the LAGLIDADG endonuclease family. In terms of assembly, homodimer. Requires Mg(2+) as cofactor. Mn(2+) is required as a cofactor. The cofactor is Co(2+). It depends on Ni(2+) as a cofactor. Zn(2+) serves as cofactor.

The protein resides in the plastid. Its subcellular location is the chloroplast. Endonuclease involved in group I intron homing. Recognizes and cleaves a 19-24 bp palindromic DNA site. The protein is DNA endonuclease I-CreI of Chlamydomonas reinhardtii (Chlamydomonas smithii).